The sequence spans 243 residues: Probable 6-phosphogluconolactonase (243 aa).

It belongs to the glucosamine/galactosamine-6-phosphate isomerase family. 6-phosphogluconolactonase subfamily.

The catalysed reaction is 6-phospho-D-glucono-1,5-lactone + H2O = 6-phospho-D-gluconate + H(+). It participates in carbohydrate degradation; pentose phosphate pathway; D-ribulose 5-phosphate from D-glucose 6-phosphate (oxidative stage): step 2/3. In terms of biological role, hydrolysis of 6-phosphogluconolactone to 6-phosphogluconate. This chain is Probable 6-phosphogluconolactonase, found in Drosophila melanogaster (Fruit fly).